Consider the following 579-residue polypeptide: Type II methyltransferase M.BseCI (579 aa).

This sequence belongs to the N(4)/N(6)-methyltransferase family.

The catalysed reaction is a 2'-deoxyadenosine in DNA + S-adenosyl-L-methionine = an N(6)-methyl-2'-deoxyadenosine in DNA + S-adenosyl-L-homocysteine + H(+). A gamma subtype methylase, recognizes the double-stranded sequence 5'-ATCGAT-3', methylation on A-5 on both strands, and protects the DNA from cleavage by the BanIII endonuclease. The protein is Type II methyltransferase M.BseCI of Geobacillus stearothermophilus (Bacillus stearothermophilus).